Reading from the N-terminus, the 201-residue chain is Peptidyl-tRNA hydrolase (201 aa).

Tyr17 is a binding site for tRNA. His22 acts as the Proton acceptor in catalysis. The tRNA site is built by Phe76, Asn78, and Asn124.

It belongs to the PTH family. As to quaternary structure, monomer.

The protein localises to the cytoplasm. The enzyme catalyses an N-acyl-L-alpha-aminoacyl-tRNA + H2O = an N-acyl-L-amino acid + a tRNA + H(+). Hydrolyzes ribosome-free peptidyl-tRNAs (with 1 or more amino acids incorporated), which drop off the ribosome during protein synthesis, or as a result of ribosome stalling. Its function is as follows. Catalyzes the release of premature peptidyl moieties from peptidyl-tRNA molecules trapped in stalled 50S ribosomal subunits, and thus maintains levels of free tRNAs and 50S ribosomes. This is Peptidyl-tRNA hydrolase from Nitratidesulfovibrio vulgaris (strain ATCC 29579 / DSM 644 / CCUG 34227 / NCIMB 8303 / VKM B-1760 / Hildenborough) (Desulfovibrio vulgaris).